Reading from the N-terminus, the 506-residue chain is Glycerol kinase (506 aa).

Threonine 14 is a binding site for ADP. Threonine 14, threonine 15, and serine 16 together coordinate ATP. Position 14 (threonine 14) interacts with sn-glycerol 3-phosphate. Arginine 18 contributes to the ADP binding site. Residues arginine 84, glutamate 85, and tyrosine 136 each contribute to the sn-glycerol 3-phosphate site. Glycerol-binding residues include arginine 84, glutamate 85, and tyrosine 136. Position 232 is a phosphohistidine; by HPr (histidine 232). Residue aspartate 246 participates in sn-glycerol 3-phosphate binding. Positions 246 and 247 each coordinate glycerol. The ADP site is built by threonine 268 and glycine 311. ATP-binding residues include threonine 268, glycine 311, glutamine 315, and glycine 412. The ADP site is built by glycine 412 and asparagine 416.

The protein belongs to the FGGY kinase family. In terms of assembly, homotetramer and homodimer (in equilibrium). The phosphoenolpyruvate-dependent sugar phosphotransferase system (PTS), including enzyme I, and histidine-containing protein (HPr) are required for the phosphorylation of His-232, which leads to the activation of the enzyme.

The enzyme catalyses glycerol + ATP = sn-glycerol 3-phosphate + ADP + H(+). It functions in the pathway polyol metabolism; glycerol degradation via glycerol kinase pathway; sn-glycerol 3-phosphate from glycerol: step 1/1. Activated by phosphorylation and inhibited by fructose 1,6-bisphosphate (FBP). Key enzyme in the regulation of glycerol uptake and metabolism. Catalyzes the phosphorylation of glycerol to yield sn-glycerol 3-phosphate. The polypeptide is Glycerol kinase (Enterococcus casseliflavus (Enterococcus flavescens)).